We begin with the raw amino-acid sequence, 181 residues long: Probable pyruvoyl-dependent arginine decarboxylase (181 aa).

Ser-43 is subject to Pyruvic acid (Ser).

It belongs to the PdaD family. The cofactor is pyruvate.

It carries out the reaction L-arginine + H(+) = agmatine + CO2. This chain is Probable pyruvoyl-dependent arginine decarboxylase, found in Chlorobium luteolum (strain DSM 273 / BCRC 81028 / 2530) (Pelodictyon luteolum).